The chain runs to 323 residues: MAADPTTGGGEAESFFRAAPPLRDQDRVAGDLADFVARHSGSGGGGRLAGVVCVTSGGTTVPLEQRCVRYIDNFSSGQRGAASTEYFLKAGYAVIFIYRRGSKQPYCRFLPEDSFLDLFELGEESDIQVPESHAAVVKTAIRNYRKAIDEGLLLKLPFTTIFEYLQLLQMVGTAMNCLGRQGMFYLAAAVSDFYVPWESMAKHKIESASGPLNMQLNQVPKMLFILRKQWAPSAFCVSFKLETDPDILLQKAEAALRKYGMNVVVANELANYKDVVVMVTSNGRTTVRRPSKEDDVEEQLIDLLVEMHSEHIMQLNQDVHKLT.

Belongs to the PPC synthetase family. Homodimer.

It carries out the reaction (R)-4'-phosphopantothenate + L-cysteine + CTP = N-[(R)-4-phosphopantothenoyl]-L-cysteine + CMP + diphosphate + H(+). It functions in the pathway cofactor biosynthesis; coenzyme A biosynthesis; CoA from (R)-pantothenate: step 2/5. Functionally, catalyzes the first step in the biosynthesis of coenzyme A from vitamin B5, where cysteine is conjugated to 4'-phosphopantothenate to form 4-phosphopantothenoylcysteine. The polypeptide is Phosphopantothenate--cysteine ligase 2 (Oryza sativa subsp. japonica (Rice)).